The chain runs to 413 residues: MNAEIISVGTEILLGEIVDTNAVYLSQLFAKLGIDVFNKITVGDNEKNIMDALEVASKRSDLVVTIGGLGPTEDDITKQSLAKFVGKNLKHHPEALQQITDYFKKQNRPLTKNNERQALLLDGAKPIHNPNGLALGIFYHTEQTDYIVLPGPPSEFEPMVDEKVLPLLSQQYGLEKTIQSKTLHFVGIGEADLAARVDEIVRNQSNPTIALYFKPTDVTIRLTAKANSKLAAEEILNHTKKQLLDRVGEFFYAEGDRVSFTDFVVNQLIKRNISLTAAESLTGGAFESTVVETSGAATIFPGGFVTYADEVKSKLIGVQPATIEENTVVSRQVAEEMARGAQKTLDTDIAVSFTGVAGPGALEHHQPGNVWIGLAKRDGSIVTKEFNFVGNREKIRHLAVMNGFRMIWENVIK.

Belongs to the CinA family.

The chain is Putative competence-damage inducible protein from Pediococcus pentosaceus (strain ATCC 25745 / CCUG 21536 / LMG 10740 / 183-1w).